Reading from the N-terminus, the 43-residue chain is uncharacterized protein (43 aa).

The N-terminal stretch at 1 to 17 (MYRRLLLNLFCMVFLQA) is a signal peptide.

This is an uncharacterized protein from Helicobacter pylori (strain J99 / ATCC 700824) (Campylobacter pylori J99).